A 390-amino-acid chain; its full sequence is MDLKTKYYLKSKFQEYYRTAKIHLPAKLPEREWGVLSFDDMPETVMRRHKSFGSAGEVEDYLTGMAPAHVYYSVAYYTYPNAPTMKEKQWLAADLIFDLDADHIPGAPNSYSDMLDHVKKETLKLYDLLTDDFGFKEEDIGAVFSGGRGYHFHISDPRVLSLESAERREIVDYISGRGLNLDKIFVKKGVSGDAGSEKATMNVFPSEDDGGWGGRINHHMIAYLRELAAKEDAEKLFTGFDRIGKKTAKRIVEILRDETQVDLLKKGNMEALSRVNKDIIQTLAERSVTELSASVDEPVTGDIKRLIRLPGSLHGKSGMCVTSLSISQLEDFDPLNDAIVFSDKPVKLKVIRTFAVQMKGKDLHVEEGVQELPEYAAIYLMCRGAAEYGP.

Residues aspartate 98, aspartate 100, and aspartate 296 contribute to the active site.

Belongs to the eukaryotic-type primase small subunit family. In terms of assembly, heterodimer of a small subunit (PriS) and a large subunit (PriL). Mg(2+) serves as cofactor. It depends on Mn(2+) as a cofactor.

In terms of biological role, catalytic subunit of DNA primase, an RNA polymerase that catalyzes the synthesis of short RNA molecules used as primers for DNA polymerase during DNA replication. The small subunit contains the primase catalytic core and has DNA synthesis activity on its own. Binding to the large subunit stabilizes and modulates the activity, increasing the rate of DNA synthesis while decreasing the length of the DNA fragments, and conferring RNA synthesis capability. The DNA polymerase activity may enable DNA primase to also catalyze primer extension after primer synthesis. May also play a role in DNA repair. The polypeptide is DNA primase small subunit PriS (Methanococcoides burtonii (strain DSM 6242 / NBRC 107633 / OCM 468 / ACE-M)).